The sequence spans 69 residues: Putative membrane protein insertion efficiency factor (69 aa).

Belongs to the UPF0161 family.

Its subcellular location is the cell inner membrane. Its function is as follows. Could be involved in insertion of integral membrane proteins into the membrane. This chain is Putative membrane protein insertion efficiency factor, found in Chromobacterium violaceum (strain ATCC 12472 / DSM 30191 / JCM 1249 / CCUG 213 / NBRC 12614 / NCIMB 9131 / NCTC 9757 / MK).